The chain runs to 215 residues: Cytochrome b6 (215 aa).

Residues 32–52 traverse the membrane as a helical segment; sequence IFYCLGGITLTCFLVQVATGF. Cysteine 35 is a heme c binding site. Residues histidine 86 and histidine 100 each coordinate heme b. A run of 3 helical transmembrane segments spans residues 90 to 110, 116 to 136, and 186 to 206; these read ASMM…TGGF, LTWV…VTGY, and LHTF…FLMI. 2 residues coordinate heme b: histidine 187 and histidine 202.

Belongs to the cytochrome b family. PetB subfamily. As to quaternary structure, the 4 large subunits of the cytochrome b6-f complex are cytochrome b6, subunit IV (17 kDa polypeptide, PetD), cytochrome f and the Rieske protein, while the 4 small subunits are PetG, PetL, PetM and PetN. The complex functions as a dimer. It depends on heme b as a cofactor. Requires heme c as cofactor.

The protein resides in the plastid. Its subcellular location is the chloroplast thylakoid membrane. Component of the cytochrome b6-f complex, which mediates electron transfer between photosystem II (PSII) and photosystem I (PSI), cyclic electron flow around PSI, and state transitions. The chain is Cytochrome b6 from Pisum sativum (Garden pea).